Consider the following 50-residue polypeptide: Peroxiredoxin-6 (50 aa).

In terms of domain architecture, Thioredoxin spans 1–50 (DFTPVCTTELGRLAPEFAKRVVFIFGPDKKLKLSILYPATTGRNFDEILR). T3 carries the phosphothreonine modification. C6 serves as the catalytic Cysteine sulfenic acid (-SOH) intermediate; for peroxidase activity. K19 carries the N6-acetyllysine modification. D28 serves as the catalytic For phospholipase activity.

The protein belongs to the peroxiredoxin family. Prx6 subfamily. Homodimer. Interacts with GSTP1; mediates PRDX6 glutathionylation and regeneration. Interacts with APEX1. Interacts with STH. May interact with FAM168B. May interact with HTR2A. Irreversibly inactivated by overoxidation of Cys-6 to sulfinic acid (Cys-SO(2)H) and sulfonic acid (Cys-SO(3)H) forms upon oxidative stress. In terms of processing, phosphorylation at Thr-177 by MAP kinases increases the phospholipase activity of the enzyme. The phosphorylated form exhibits a greater lysophosphatidylcholine acyltransferase activity compared to the non-phosphorylated form.

The protein localises to the cytoplasm. Its subcellular location is the lysosome. The enzyme catalyses a hydroperoxide + 2 glutathione = an alcohol + glutathione disulfide + H2O. It catalyses the reaction a 1,2-diacyl-sn-glycero-3-phosphocholine + H2O = a 1-acyl-sn-glycero-3-phosphocholine + a fatty acid + H(+). It carries out the reaction a 1-acyl-sn-glycero-3-phosphocholine + an acyl-CoA = a 1,2-diacyl-sn-glycero-3-phosphocholine + CoA. The catalysed reaction is 1-hexadecanoyl-sn-glycero-3-phosphocholine + hexadecanoyl-CoA = 1,2-dihexadecanoyl-sn-glycero-3-phosphocholine + CoA. The enzyme catalyses 1,2-dihexadecanoyl-sn-glycero-3-phosphocholine + H2O = 1-hexadecanoyl-sn-glycero-3-phosphocholine + hexadecanoate + H(+). In terms of biological role, thiol-specific peroxidase that catalyzes the reduction of hydrogen peroxide and organic hydroperoxides to water and alcohols, respectively. Can reduce H(2)O(2) and short chain organic, fatty acid, and phospholipid hydroperoxides. Also has phospholipase activity, and can therefore either reduce the oxidized sn-2 fatty acyl group of phospholipids (peroxidase activity) or hydrolyze the sn-2 ester bond of phospholipids (phospholipase activity). These activities are dependent on binding to phospholipids at acidic pH and to oxidized phospholipds at cytosolic pH. Plays a role in cell protection against oxidative stress by detoxifying peroxides and in phospholipid homeostasis. Exhibits acyl-CoA-dependent lysophospholipid acyltransferase which mediates the conversion of lysophosphatidylcholine (1-acyl-sn-glycero-3-phosphocholine or LPC) into phosphatidylcholine (1,2-diacyl-sn-glycero-3-phosphocholine or PC). Shows a clear preference for LPC as the lysophospholipid and for palmitoyl CoA as the fatty acyl substrate. The protein is Peroxiredoxin-6 of Mesocricetus auratus (Golden hamster).